Reading from the N-terminus, the 120-residue chain is NAD(P)H-quinone oxidoreductase subunit 3, chloroplastic (120 aa).

A run of 3 helical transmembrane segments spans residues 9 to 29, 64 to 84, and 88 to 108; these read IFWA…LISG, MFAL…PWAV, and ILGV…VVGS.

Belongs to the complex I subunit 3 family. NDH is composed of at least 16 different subunits, 5 of which are encoded in the nucleus.

Its subcellular location is the plastid. It localises to the chloroplast thylakoid membrane. It carries out the reaction a plastoquinone + NADH + (n+1) H(+)(in) = a plastoquinol + NAD(+) + n H(+)(out). The enzyme catalyses a plastoquinone + NADPH + (n+1) H(+)(in) = a plastoquinol + NADP(+) + n H(+)(out). NDH shuttles electrons from NAD(P)H:plastoquinone, via FMN and iron-sulfur (Fe-S) centers, to quinones in the photosynthetic chain and possibly in a chloroplast respiratory chain. The immediate electron acceptor for the enzyme in this species is believed to be plastoquinone. Couples the redox reaction to proton translocation, and thus conserves the redox energy in a proton gradient. This Nymphaea alba (White water-lily) protein is NAD(P)H-quinone oxidoreductase subunit 3, chloroplastic.